The primary structure comprises 556 residues: Vacuolar protein 8 (556 aa).

The N-myristoyl glycine moiety is linked to residue G2. S-palmitoyl cysteine attachment occurs at residues C4, C5, and C7. ARM repeat units follow at residues 38–74 (NRSEVDFFTDGPLRALSTLVYSENIDLQRSAALAFAE), 75–115 (VTEK…NLAV), 117–156 (DSNKVLIVNMGGLEPLIRQMMSPNIEVQCNAVGCITNLAT), 158–197 (DQNKSKIATSGALIPLTKLAKSKDLRVQRNATGALLNMTH), 199–238 (LENRQELVNAGSVPILVQLLSSTDPDVQYYCTTALSNIAV), 242–281 (NRKKLASTEPKLISQLVQLMDSTSPRVQCQATLALRNLAS), 283–322 (ANYQLEIVRAGGLPNLVTLLNSTHQPLVLAAVACIRNISI), 324–364 (PLNE…NLAA), and 408–447 (DDLKMKLLDSNIIEVLLPLTSSENGEVCGNAAAALANLCS).

It belongs to the beta-catenin family.

The protein resides in the vacuole membrane. In terms of biological role, functions in both vacuole inheritance and protein targeting from the cytoplasm to vacuole. The protein is Vacuolar protein 8 (VAC8) of Komagataella pastoris (Yeast).